A 51-amino-acid polypeptide reads, in one-letter code: Insulin (51 aa).

Cystine bridges form between cysteine 7–cysteine 37, cysteine 19–cysteine 50, and cysteine 36–cysteine 41.

It belongs to the insulin family. In terms of assembly, heterodimer of a B chain and an A chain linked by two disulfide bonds.

Its subcellular location is the secreted. Functionally, insulin decreases blood glucose concentration. It increases cell permeability to monosaccharides, amino acids and fatty acids. It accelerates glycolysis, the pentose phosphate cycle, and glycogen synthesis in liver. The polypeptide is Insulin (ins) (Anguilla rostrata (American eel)).